A 266-amino-acid chain; its full sequence is Aquaporin TIP3-2 (266 aa).

The next 2 membrane-spanning stretches (helical) occupy residues 29-49 (AAISEFIATAIFVFAAEGSVL) and 66-86 (GLVAVALAHALGLAVAVAVAV). The NPA 1 motif lies at 94–96 (NPA). Helical transmembrane passes span 109–129 (LVRAVLYWAAQLLGAVAATLL), 153–173 (AVLLEAVMTFGFVYAYYATVV), and 180–200 (LGTIAPLAVGFLLGANVLAGG). The NPA 2 signature appears at 208–210 (NPA). Residues 228–248 (YWLGPFLGAGLAGLVYEYLLI) form a helical membrane-spanning segment.

It belongs to the MIP/aquaporin (TC 1.A.8) family. TIP (TC 1.A.8.10) subfamily.

The protein localises to the vacuole membrane. Aquaporins facilitate the transport of water and small neutral solutes across cell membranes. The chain is Aquaporin TIP3-2 (TIP3-2) from Zea mays (Maize).